The following is a 1372-amino-acid chain: MIKKIIVVVAFMLTGFSLTAMSASAEEITDLFLQKEVTYSGVEGGKIGENWKYPQFVGEKAVDGDETTRWSADKQDEQWLIVDLGEVKNIGELVLQLHAESPVYEILVSTDGESYQSIFKEENGKGGQPTKKYIDGNNVQARFVKYQQMKMWQHTNKQFYSSSIISFEAYEKKRLPEAIKLLTENLTISEKRKQQLAFEVSPAGVDITEDQIEWSSSDPTIVTVDQTGNLTAVKSGEAKVTVKIKGTEISDTIPVTVVAENKQYAEMRAKWKMRLLGTTQYDNDADVQQYRAQIATESLALWQTLNQAADREYLWERKPSDTVSADYTTQFTNIKKLALGYYEPSSELFEKPEVYDAIVKGIEFMIDTKKYNGTYYTGNWWDWQIGSAQPLTDTLILLHDDLLNTDAEKLNKFTAPLMLYAKDPNIQWPIYRATGANLTDISITVLGTGLLLEDNQRLVQVQEAVPSVLKSVSSGDGLYPDGSLIQHGYFPYNGSYGNELLKGFGRIQTILQGSDWEMNDPNISNLFNVVDKGYLQLMVNGKMPSMVSGRSISRAPETNPFTTEFESGKETIANLTLIAKFAPENLRNDIYTSIQTWLQQSGSYYHFFKKPRDFEALIDLKNVVNSASPAQATPMQSLNVYGSMDRVLQKNNEYAVGISMYSQRVGNYEFGNTENKKGWHTADGMLYLYNQDFAQFDEGYWATIDPYRLPGTTVDTRELANGAYTGKRSPQSWVGGSNNGQVASIGMFLDKSNEGMNLVAKKSWFLLDGQIINLGSGITGTTDASIETILDNRMIHPQEVKLNQGSDKDNSWISLSAANPLNNIGYVFPNSMNTLDVQIEERSGRYGDINEYFVNDKTYTNTFAKISKNYGKTVENGTYEYLTVVGKTNEEIAALSKNKGYTVLENTANLQAIEAGNYVMMNTWNNDQEIAGLYAYDPMSVISEKIDNGVYRLTLANPLQNNASVSIEFDKGILEVVAADPEISVDQNIITLNSAGLNGSSRSIIVKTTPEVTKEALEKLIQEQKEHQEKDYTASSWKVYSEALKQAQTVADQTTATQAEVDQAETELRSAVKQLVKVPTKEVDKTNLLKIIKENEKHQEKDYTASSWKVYSEALKQAQTVADQTTATQAEVDQAEAKLRSAVKQLVKVPTKEVDKTNLLKIIKENEKHQEKDYTASSWKVYSEALKQAQTVADQTTATQAEVDQAETELRSAVKQLVKVPTKEVDKTNLLKIIKENEKHQEKDYTASSWKVYSEALKQAQTVADQTTATQAEVDQAEAKLRSAVKRLTLKNSGENKKEQKNGGNNGHLNTSTGVDQTGTKQVKPSSQGGFRKASQFLPSTGEKKSIALVIIGLLVIASGCLLVFRKSKSKK.

An N-terminal signal peptide occupies residues 1 to 25 (MIKKIIVVVAFMLTGFSLTAMSASA). Residues 63–172 (DGDETTRWSA…SIISFEAYEK (110 aa)) form the F5/8 type C domain. The BIG2 domain occupies 183–242 (TENLTISEKRKQQLAFEVSPAGVDITEDQIEWSSSDPTIVTVDQTGNLTAVKSGEAKVTV). Active-site residues include His487, Tyr496, and Arg550. FIVAR domains are found at residues 1014-1075 (KEAL…VKQL), 1084-1146 (DKTN…VKQL), 1155-1217 (DKTN…VKQL), and 1226-1288 (DKTN…VKRL). Residues 1288 to 1336 (LTLKNSGENKKEQKNGGNNGHLNTSTGVDQTGTKQVKPSSQGGFRKASQ) are disordered. Residues 1308 to 1329 (HLNTSTGVDQTGTKQVKPSSQG) are compositionally biased toward polar residues. An LPXTG sorting signal motif is present at residues 1338–1342 (LPSTG). Thr1341 carries the post-translational modification Pentaglycyl murein peptidoglycan amidated threonine. Positions 1342 to 1372 (GEKKSIALVIIGLLVIASGCLLVFRKSKSKK) are cleaved as a propeptide — removed by sortase.

This sequence belongs to the polysaccharide lyase 8 family.

Its subcellular location is the secreted. The protein localises to the cell wall. Functionally, has a very modest degradation activity against heparin sodium salt (HS) in vitro. Involved in the pathogenesis of vancomycin-resistant E.faecalis infections. The chain is Polysaccharide lyase 8 family protein HylA from Enterococcus faecalis (strain ATCC 700802 / V583).